Reading from the N-terminus, the 150-residue chain is Transcriptional repressor NrdR (150 aa).

A zinc finger spans residues 3-33 (CPYCTGESAVIDTRELDNGETIRRRRRCKHC). One can recognise an ATP-cone domain in the interval 48 to 138 (VMVVKKNGDR…VYRSFSDLGK (91 aa)).

It belongs to the NrdR family. Zn(2+) is required as a cofactor.

Negatively regulates transcription of bacterial ribonucleotide reductase nrd genes and operons by binding to NrdR-boxes. The protein is Transcriptional repressor NrdR of Herpetosiphon aurantiacus (strain ATCC 23779 / DSM 785 / 114-95).